A 189-amino-acid polypeptide reads, in one-letter code: Elongation factor P (189 aa).

This sequence belongs to the elongation factor P family.

It localises to the cytoplasm. The protein operates within protein biosynthesis; polypeptide chain elongation. Involved in peptide bond synthesis. Stimulates efficient translation and peptide-bond synthesis on native or reconstituted 70S ribosomes in vitro. Probably functions indirectly by altering the affinity of the ribosome for aminoacyl-tRNA, thus increasing their reactivity as acceptors for peptidyl transferase. This chain is Elongation factor P, found in Chloroflexus aggregans (strain MD-66 / DSM 9485).